The sequence spans 1117 residues: Protein ECM21 (1117 aa).

Disordered regions lie at residues 1-48 (MPFI…RRSS) and 63-155 (VHSP…YSQI). Over residues 11 to 34 (KNSSHSLSETDLNQSKGQPFQPSP) the composition is skewed to polar residues. The residue at position 18 (serine 18) is a Phosphoserine. Low complexity predominate over residues 70–81 (NNTTKGGNNNGN). The residue at position 115 (serine 115) is a Phosphoserine. Residues 117–130 (SDSATTTPRSSTSD) are compositionally biased toward low complexity. Serine 140 carries the post-translational modification Phosphoserine. A Glycyl lysine isopeptide (Lys-Gly) (interchain with G-Cter in ubiquitin) cross-link involves residue lysine 191. 2 disordered regions span residues 275–312 (ATTA…ELNT) and 486–523 (YRQD…AQAH). Serine 286 is subject to Phosphoserine. The segment covering 501–519 (SSSSLSSTTSSLKLTETES) has biased composition (low complexity). Phosphoserine is present on residues serine 527 and serine 550. Glycyl lysine isopeptide (Lys-Gly) (interchain with G-Cter in ubiquitin) cross-links involve residues lysine 577, lysine 651, and lysine 712. Serine 775 carries the post-translational modification Phosphoserine. Residues lysine 794, lysine 807, and lysine 1024 each participate in a glycyl lysine isopeptide (Lys-Gly) (interchain with G-Cter in ubiquitin) cross-link. Disordered regions lie at residues 1016–1065 (RSRF…KDKQ) and 1079–1117 (KDDE…SDEE). Residues 1027-1059 (STPSPVNRSHNSSPTNGLSQANGTVRIPNATTE) show a composition bias toward polar residues. At serine 1035 the chain carries Phosphoserine. Over residues 1089–1098 (SSSSADSLLS) the composition is skewed to low complexity.

It belongs to the CSR2 family.

The protein resides in the cytoplasm. In terms of biological role, may be involved in cell wall organization and biogenesis. This is Protein ECM21 (ECM21) from Saccharomyces cerevisiae (strain ATCC 204508 / S288c) (Baker's yeast).